The primary structure comprises 749 residues: Meiotically up-regulated gene 122 protein (749 aa).

Topologically, residues 1–20 are cytoplasmic; the sequence is MYRKWDLCITRHLLPYIEHS. A helical; Signal-anchor for type II membrane protein transmembrane segment spans residues 21–41; that stretch reads VIPIIALLVLSLIFYILYICF. At 42-749 the chain is on the lumenal side; sequence GTTSYILSGI…LLSNALRSII (708 aa). The PXA domain maps to 88 to 261; that stretch reads PPELEAPLQL…CIILYFSSSE (174 aa). Positions 311–422 constitute a PX domain; the sequence is LHYQFLKEAS…KFFAKSMRSH (112 aa). Disordered stretches follow at residues 439-489 and 504-546; these read QSSS…LSQQ and GSCT…PPKP. 2 stretches are compositionally biased toward polar residues: residues 440 to 461 and 475 to 489; these read SSSV…NKTS and LSHQ…LSQQ.

This sequence belongs to the sorting nexin family.

It is found in the endoplasmic reticulum membrane. Has a role in meiosis. The sequence is that of Meiotically up-regulated gene 122 protein (mug122) from Schizosaccharomyces pombe (strain 972 / ATCC 24843) (Fission yeast).